Here is a 625-residue protein sequence, read N- to C-terminus: Isocitrate dehydrogenase kinase/phosphatase (625 aa).

ATP-binding positions include 325-331 (APGIKGM) and lysine 346. Residue aspartate 381 is part of the active site. The segment at 596–625 (RRHSPGRNDHELLTHLPPEPMLTGLSGMTP) is disordered.

Belongs to the AceK family.

It is found in the cytoplasm. It catalyses the reaction L-seryl-[isocitrate dehydrogenase] + ATP = O-phospho-L-seryl-[isocitrate dehydrogenase] + ADP + H(+). In terms of biological role, bifunctional enzyme which can phosphorylate or dephosphorylate isocitrate dehydrogenase (IDH) on a specific serine residue. This is a regulatory mechanism which enables bacteria to bypass the Krebs cycle via the glyoxylate shunt in response to the source of carbon. When bacteria are grown on glucose, IDH is fully active and unphosphorylated, but when grown on acetate or ethanol, the activity of IDH declines drastically concomitant with its phosphorylation. This Polaromonas sp. (strain JS666 / ATCC BAA-500) protein is Isocitrate dehydrogenase kinase/phosphatase.